The primary structure comprises 89 residues: DNA/RNA-binding protein Alba (89 aa).

This sequence belongs to the histone-like Alba family.

The protein localises to the cytoplasm. It localises to the chromosome. Binds double-stranded DNA tightly but without sequence specificity. Involved in DNA compaction. This chain is DNA/RNA-binding protein Alba, found in Methanothrix thermoacetophila (strain DSM 6194 / JCM 14653 / NBRC 101360 / PT) (Methanosaeta thermophila).